The chain runs to 293 residues: Large ribosomal subunit protein uL2c (293 aa).

The interval 224–245 (VMNPVDHPHGGGEGKSPIGRAR) is disordered.

It belongs to the universal ribosomal protein uL2 family. Part of the 50S ribosomal subunit.

The protein localises to the plastid. Its subcellular location is the chloroplast. This Pyropia yezoensis (Susabi-nori) protein is Large ribosomal subunit protein uL2c (rpl2).